The primary structure comprises 466 residues: Soluble pyridine nucleotide transhydrogenase (466 aa).

Residue 36 to 45 (ERYHNIGGGC) participates in FAD binding.

This sequence belongs to the class-I pyridine nucleotide-disulfide oxidoreductase family. Requires FAD as cofactor.

The protein resides in the cytoplasm. The catalysed reaction is NAD(+) + NADPH = NADH + NADP(+). Conversion of NADPH, generated by peripheral catabolic pathways, to NADH, which can enter the respiratory chain for energy generation. This Erwinia tasmaniensis (strain DSM 17950 / CFBP 7177 / CIP 109463 / NCPPB 4357 / Et1/99) protein is Soluble pyridine nucleotide transhydrogenase.